Reading from the N-terminus, the 1403-residue chain is Nidogen-2 (1403 aa).

A signal peptide spans 1-30; that stretch reads MFRDPTAGWLTPPSPLSLLVMLLLLSRVGA. In terms of domain architecture, NIDO spans 108 to 274; that stretch reads PFLADIDTSH…GVWAFHIGSR (167 aa). The disordered stretch occupies residues 323-403; sequence EDVEYPPVEP…KQGRPVGEGE (81 aa). Residues S386 and S475 are each glycosylated (O-linked (Xyl...) (chondroitin sulfate) serine). Positions 386 to 395 are enriched in polar residues; it reads SASLDPQTKQ. An EGF-like 1 domain is found at 507–547; it reads NLETCEHSHGRCSQHAFCTDYTTGFCCHCQSRFYGNGKHCL. 3 cysteine pairs are disulfide-bonded: C511–C524, C518–C533, and C535–C546. The Nidogen G2 beta-barrel domain maps to 551-781; the sequence is APHRVNGKVS…GPVEVDSAPV (231 aa). 3 N-linked (GlcNAc...) asparagine glycosylation sites follow: N681, N716, and N726. Residues 782–823 form the EGF-like 2 domain; that stretch reads GVNPCYDGSHTCDTTARCHPGTGVDYTCECTPGFQGDGRSCV. Disulfide bonds link C786/C799, C793/C809, C811/C822, C828/C841, C835/C850, C852/C865, C875/C890, C882/C900, C902/C913, C919/C930, C924/C939, C941/C952, C968/C991, C1002/C1009, C1011/C1033, C1047/C1071, C1082/C1089, and C1091/C1112. One can recognise an EGF-like 3; calcium-binding domain in the interval 824–862; that stretch reads DVNECATGFHRCGPNSVCVNLVGSYRCECRSGYEFADDQ. The 44-residue stretch at 871 to 914 folds into the EGF-like 4 domain; that stretch reads PPNPCLDGSHTCAPEGQARCIHHGGSSFSCACLPGFIGTGHQCS. The EGF-like 5; calcium-binding domain occupies 915–953; it reads DVDECAENRCHEAAICYNTPGSFSCRCQPGYRGDGFHCT. Residues 946–948 carry the Cell attachment site motif; sequence RGD. 2 Thyroglobulin type-1 domains span residues 965–1033 and 1044–1112; these read LKPC…PPHC and RTVC…RPAC. The tract at residues 1021–1043 is disordered; it reads GTQTPPGSTPPHCGPPPEPTQRP. Residues 1027–1040 show a composition bias toward pro residues; that stretch reads GSTPPHCGPPPEPT. The N-linked (GlcNAc...) asparagine glycan is linked to N1152. 5 LDL-receptor class B repeats span residues 1182-1225, 1226-1268, 1269-1313, 1314-1355, and 1357-1401; these read RMVY…DHFR, RTMY…DPIR, GNLY…DPFS, KLLC…YADH, and YHTD…CPTG. R1336 is subject to Omega-N-methylarginine.

Interacts with LAMA2. Interacts with COL13A1. Interacts with EFEMP2. Post-translationally, highly N- and O-glycosylated.

It localises to the secreted. Its subcellular location is the extracellular space. The protein resides in the extracellular matrix. It is found in the basement membrane. Its function is as follows. Cell adhesion glycoprotein. Might be involved in osteoblast differentiation. It probably has a role in cell-extracellular matrix interactions. The chain is Nidogen-2 (Nid2) from Mus musculus (Mouse).